Reading from the N-terminus, the 316-residue chain is 4-hydroxy-3-methylbut-2-enyl diphosphate reductase (316 aa).

Residue Cys-12 coordinates [4Fe-4S] cluster. (2E)-4-hydroxy-3-methylbut-2-enyl diphosphate-binding residues include His-41 and His-74. Positions 41 and 74 each coordinate dimethylallyl diphosphate. 2 residues coordinate isopentenyl diphosphate: His-41 and His-74. Cys-96 is a [4Fe-4S] cluster binding site. His-124 lines the (2E)-4-hydroxy-3-methylbut-2-enyl diphosphate pocket. Residue His-124 coordinates dimethylallyl diphosphate. Position 124 (His-124) interacts with isopentenyl diphosphate. Catalysis depends on Glu-126, which acts as the Proton donor. Residue Thr-167 coordinates (2E)-4-hydroxy-3-methylbut-2-enyl diphosphate. Position 197 (Cys-197) interacts with [4Fe-4S] cluster. (2E)-4-hydroxy-3-methylbut-2-enyl diphosphate contacts are provided by Ser-225, Ser-226, Asn-227, and Ser-269. Positions 225, 226, 227, and 269 each coordinate dimethylallyl diphosphate. Isopentenyl diphosphate contacts are provided by Ser-225, Ser-226, Asn-227, and Ser-269.

The protein belongs to the IspH family. In terms of assembly, homodimer. [4Fe-4S] cluster is required as a cofactor.

It catalyses the reaction isopentenyl diphosphate + 2 oxidized [2Fe-2S]-[ferredoxin] + H2O = (2E)-4-hydroxy-3-methylbut-2-enyl diphosphate + 2 reduced [2Fe-2S]-[ferredoxin] + 2 H(+). The enzyme catalyses dimethylallyl diphosphate + 2 oxidized [2Fe-2S]-[ferredoxin] + H2O = (2E)-4-hydroxy-3-methylbut-2-enyl diphosphate + 2 reduced [2Fe-2S]-[ferredoxin] + 2 H(+). It participates in isoprenoid biosynthesis; dimethylallyl diphosphate biosynthesis; dimethylallyl diphosphate from (2E)-4-hydroxy-3-methylbutenyl diphosphate: step 1/1. It functions in the pathway isoprenoid biosynthesis; isopentenyl diphosphate biosynthesis via DXP pathway; isopentenyl diphosphate from 1-deoxy-D-xylulose 5-phosphate: step 6/6. Catalyzes the conversion of 1-hydroxy-2-methyl-2-(E)-butenyl 4-diphosphate (HMBPP) into a mixture of isopentenyl diphosphate (IPP) and dimethylallyl diphosphate (DMAPP). Acts in the terminal step of the DOXP/MEP pathway for isoprenoid precursor biosynthesis. This is 4-hydroxy-3-methylbut-2-enyl diphosphate reductase from Escherichia coli (strain ATCC 8739 / DSM 1576 / NBRC 3972 / NCIMB 8545 / WDCM 00012 / Crooks).